The primary structure comprises 765 residues: Alpha,alpha-trehalose phosphorylase (765 aa).

Residue 352–353 (WD) coordinates substrate. The active-site Proton donor is the E479. 591 to 592 (KQ) provides a ligand contact to substrate.

This sequence belongs to the glycosyl hydrolase 65 family. Homodimer.

The enzyme catalyses alpha,alpha-trehalose + phosphate = beta-D-glucose 1-phosphate + D-glucose. It participates in glycan degradation; trehalose degradation. Catalyzes the reversible phosphorolytic cleavage of trehalose. Phosphorolysis is specific for trehalose. The polypeptide is Alpha,alpha-trehalose phosphorylase (treP) (Geobacillus stearothermophilus (Bacillus stearothermophilus)).